The primary structure comprises 366 residues: Putative integrase/recombinase HI_1572 (366 aa).

In terms of domain architecture, Core-binding (CB) spans 54 to 133 (ITLDELIDKY…SLSALMAKTI (80 aa)). A Tyr recombinase domain is found at 168–331 (IFVSGYDVEH…DMAEGYKTKA (164 aa)). Residues R201, K226, and H308 contribute to the active site. The active-site O-(3'-phospho-DNA)-tyrosine intermediate is the Y318.

It belongs to the 'phage' integrase family.

This Haemophilus influenzae (strain ATCC 51907 / DSM 11121 / KW20 / Rd) protein is Putative integrase/recombinase HI_1572.